The primary structure comprises 116 residues: Large ribosomal subunit protein uL18 (116 aa).

The protein belongs to the universal ribosomal protein uL18 family. Part of the 50S ribosomal subunit; part of the 5S rRNA/L5/L18/L25 subcomplex. Contacts the 5S and 23S rRNAs.

This is one of the proteins that bind and probably mediate the attachment of the 5S RNA into the large ribosomal subunit, where it forms part of the central protuberance. This chain is Large ribosomal subunit protein uL18, found in Shewanella amazonensis (strain ATCC BAA-1098 / SB2B).